Reading from the N-terminus, the 539-residue chain is Glutamate/serine transporter AimA (539 aa).

The next 13 membrane-spanning stretches (helical) occupy residues 11 to 31 (FSLM…FGAW), 36 to 56 (IAGP…LFIA), 82 to 102 (SFIG…VIPV), 137 to 157 (AFAS…VNLF), 164 to 184 (ITIF…FVGF), 199 to 219 (GWAS…FNGF), 238 to 258 (IAVV…QIAF), 283 to 303 (LAIA…AFVS), 350 to 370 (LIVS…AEII), 401 to 421 (LKGL…VLYW), 424 to 444 (WPLT…YFYY), 457 to 477 (FKAG…SYLG), and 486 to 506 (VIHY…FYVW).

This sequence belongs to the amino acid-polyamine-organocation (APC) superfamily. AGT (TC 2.A.3.11) family.

Its subcellular location is the cell membrane. In terms of biological role, major glutamate and serine transporter. Cannot transport threonine. AimA is the major glutamate transporter under standard growth conditions when glutamate is not limiting in the medium. This Bacillus subtilis (strain 168) protein is Glutamate/serine transporter AimA.